We begin with the raw amino-acid sequence, 307 residues long: N-acetylmuramic acid 6-phosphate etherase (307 aa).

An SIS domain is found at 59 to 222 (TADRLRQGGR…STGVMVKLGK (164 aa)). Glu-87 (proton donor) is an active-site residue. The active site involves Glu-118.

The protein belongs to the GCKR-like family. MurNAc-6-P etherase subfamily. As to quaternary structure, homodimer.

The enzyme catalyses N-acetyl-D-muramate 6-phosphate + H2O = N-acetyl-D-glucosamine 6-phosphate + (R)-lactate. It participates in amino-sugar metabolism; N-acetylmuramate degradation. Specifically catalyzes the cleavage of the D-lactyl ether substituent of MurNAc 6-phosphate, producing GlcNAc 6-phosphate and D-lactate. The polypeptide is N-acetylmuramic acid 6-phosphate etherase (Nostoc sp. (strain PCC 7120 / SAG 25.82 / UTEX 2576)).